We begin with the raw amino-acid sequence, 164 residues long: NADH-quinone oxidoreductase subunit I (164 aa).

2 4Fe-4S ferredoxin-type domains span residues 55-84 (RRYEGGEERCVACKLCEAICPAQAIYIEID) and 95-124 (KVYDIDLFKCIYCGLCEEACPVEAIVMGPY). The [4Fe-4S] cluster site is built by C64, C67, C70, C74, C104, C107, C110, and C114.

This sequence belongs to the complex I 23 kDa subunit family. NDH-1 is composed of 14 different subunits. Subunits NuoA, H, J, K, L, M, N constitute the membrane sector of the complex. [4Fe-4S] cluster serves as cofactor.

It is found in the cell inner membrane. The enzyme catalyses a quinone + NADH + 5 H(+)(in) = a quinol + NAD(+) + 4 H(+)(out). Functionally, NDH-1 shuttles electrons from NADH, via FMN and iron-sulfur (Fe-S) centers, to quinones in the respiratory chain. The immediate electron acceptor for the enzyme in this species is believed to be ubiquinone. Couples the redox reaction to proton translocation (for every two electrons transferred, four hydrogen ions are translocated across the cytoplasmic membrane), and thus conserves the redox energy in a proton gradient. The polypeptide is NADH-quinone oxidoreductase subunit I (Magnetococcus marinus (strain ATCC BAA-1437 / JCM 17883 / MC-1)).